The following is a 75-amino-acid chain: UPF0270 protein PputGB1_1339 (75 aa).

Belongs to the UPF0270 family.

The polypeptide is UPF0270 protein PputGB1_1339 (Pseudomonas putida (strain GB-1)).